Here is a 118-residue protein sequence, read N- to C-terminus: Beta-2-microglobulin (118 aa).

Residues 1–20 form the signal peptide; sequence MARFVVLVLLGLLYLSHLDA. The region spanning 25–113 is the Ig-like C1-type domain; it reads PKVQVYSRHP…TTLSEPKVVK (89 aa). An intrachain disulfide couples cysteine 45 to cysteine 99.

This sequence belongs to the beta-2-microglobulin family. Heterodimer of an alpha chain and a beta chain. Beta-2-microglobulin is the beta-chain of major histocompatibility complex class I molecules.

The protein localises to the secreted. In terms of biological role, component of the class I major histocompatibility complex (MHC). Involved in the presentation of peptide antigens to the immune system. The polypeptide is Beta-2-microglobulin (B2M) (Felis catus (Cat)).